The primary structure comprises 277 residues: Release factor glutamine methyltransferase (277 aa).

S-adenosyl-L-methionine is bound by residues 119–123, D142, and N184; that span reads GTGTG. 184–187 lines the substrate pocket; sequence NPPY.

Belongs to the protein N5-glutamine methyltransferase family. PrmC subfamily.

It catalyses the reaction L-glutaminyl-[peptide chain release factor] + S-adenosyl-L-methionine = N(5)-methyl-L-glutaminyl-[peptide chain release factor] + S-adenosyl-L-homocysteine + H(+). Functionally, methylates the class 1 translation termination release factors RF1/PrfA and RF2/PrfB on the glutamine residue of the universally conserved GGQ motif. This Enterococcus faecalis (strain ATCC 700802 / V583) protein is Release factor glutamine methyltransferase.